We begin with the raw amino-acid sequence, 349 residues long: Methylthioribose-1-phosphate isomerase (349 aa).

Substrate contacts are provided by residues 49–51, Arg92, and Gln199; that span reads RGA. Residue Asp240 is the Proton donor of the active site. 250 to 251 lines the substrate pocket; sequence NK.

Belongs to the eIF-2B alpha/beta/delta subunits family. MtnA subfamily.

It catalyses the reaction 5-(methylsulfanyl)-alpha-D-ribose 1-phosphate = 5-(methylsulfanyl)-D-ribulose 1-phosphate. It participates in amino-acid biosynthesis; L-methionine biosynthesis via salvage pathway; L-methionine from S-methyl-5-thio-alpha-D-ribose 1-phosphate: step 1/6. Catalyzes the interconversion of methylthioribose-1-phosphate (MTR-1-P) into methylthioribulose-1-phosphate (MTRu-1-P). The sequence is that of Methylthioribose-1-phosphate isomerase from Syntrophobacter fumaroxidans (strain DSM 10017 / MPOB).